The primary structure comprises 207 residues: Outer-membrane lipoprotein carrier protein (207 aa).

The first 21 residues, 1–21, serve as a signal peptide directing secretion; that stretch reads MRLIRMLLATALTFSVIPAHA.

The protein belongs to the LolA family. As to quaternary structure, monomer.

The protein localises to the periplasm. Its function is as follows. Participates in the translocation of lipoproteins from the inner membrane to the outer membrane. Only forms a complex with a lipoprotein if the residue after the N-terminal Cys is not an aspartate (The Asp acts as a targeting signal to indicate that the lipoprotein should stay in the inner membrane). The polypeptide is Outer-membrane lipoprotein carrier protein (Pseudomonas syringae pv. tomato (strain ATCC BAA-871 / DC3000)).